We begin with the raw amino-acid sequence, 95 residues long: uncharacterized protein (95 aa).

Residues 1–64 (MEIDDIFASK…PKGASGRKRT (64 aa)) are disordered. Residues 18–28 (KSNDSKSEAKA) are compositionally biased toward basic and acidic residues. Residues 35-49 (TKSTPSRPKPTNNQD) show a composition bias toward polar residues.

This is an uncharacterized protein from Schizosaccharomyces pombe (strain 972 / ATCC 24843) (Fission yeast).